The chain runs to 524 residues: PiggyBac transposable element-derived protein 5 (524 aa).

Positions 30–117 (DDVFGESGPD…DTGGPTRKMP (88 aa)) are disordered. Residues 47-59 (STSAASRSSSAAS) are compositionally biased toward low complexity. Residues 67 to 79 (PGPPGAAPPPPRA) show a composition bias toward pro residues. The span at 98-108 (LRDRPPPRFED) shows a compositional bias: basic and acidic residues. Ser521 carries the post-translational modification Phosphoserine.

The protein resides in the nucleus. Functionally, transposase that mediates sequence-specific genomic rearrangements. Can induce genomic rearrangements that inactivate the HPRT1 gene. This Homo sapiens (Human) protein is PiggyBac transposable element-derived protein 5 (PGBD5).